The primary structure comprises 507 residues: Glutamate--tRNA ligase (507 aa).

The short motif at 14-24 (PSPTGYLHIGG) is the 'HIGH' region element. Positions 261 to 265 (KLSKR) match the 'KMSKS' region motif. Lys-264 is a binding site for ATP.

Belongs to the class-I aminoacyl-tRNA synthetase family. Glutamate--tRNA ligase type 1 subfamily. In terms of assembly, monomer.

Its subcellular location is the cytoplasm. The enzyme catalyses tRNA(Glu) + L-glutamate + ATP = L-glutamyl-tRNA(Glu) + AMP + diphosphate. In terms of biological role, catalyzes the attachment of glutamate to tRNA(Glu) in a two-step reaction: glutamate is first activated by ATP to form Glu-AMP and then transferred to the acceptor end of tRNA(Glu). The protein is Glutamate--tRNA ligase of Roseiflexus castenholzii (strain DSM 13941 / HLO8).